The sequence spans 225 residues: NAD(P)H-quinone oxidoreductase subunit K, chloroplastic (225 aa).

Cys-43, Cys-44, Cys-108, and Cys-139 together coordinate [4Fe-4S] cluster.

It belongs to the complex I 20 kDa subunit family. NDH is composed of at least 16 different subunits, 5 of which are encoded in the nucleus. It depends on [4Fe-4S] cluster as a cofactor.

The protein localises to the plastid. It localises to the chloroplast thylakoid membrane. It carries out the reaction a plastoquinone + NADH + (n+1) H(+)(in) = a plastoquinol + NAD(+) + n H(+)(out). The catalysed reaction is a plastoquinone + NADPH + (n+1) H(+)(in) = a plastoquinol + NADP(+) + n H(+)(out). Functionally, NDH shuttles electrons from NAD(P)H:plastoquinone, via FMN and iron-sulfur (Fe-S) centers, to quinones in the photosynthetic chain and possibly in a chloroplast respiratory chain. The immediate electron acceptor for the enzyme in this species is believed to be plastoquinone. Couples the redox reaction to proton translocation, and thus conserves the redox energy in a proton gradient. This chain is NAD(P)H-quinone oxidoreductase subunit K, chloroplastic, found in Nasturtium officinale (Watercress).